The chain runs to 849 residues: Disks large homolog 3 (849 aa).

A disordered region spans residues 32–101 (DWQVPDPYGP…GKSTPKLNGS (70 aa)). Residues 41–53 (PSGGNGASSGYGG) show a composition bias toward gly residues. Positions 57 to 69 (QTLPSQAGATPTP) are enriched in polar residues. PDZ domains lie at 149–235 (EIVL…VRRR), 244–330 (EVNL…VAKP), and 404–484 (KIIL…AQYR). Ser157 carries the post-translational modification Phosphoserine. In terms of domain architecture, SH3 spans 519-589 (KRSLYVRALF…PSKKRVEKKE (71 aa)). Positions 659–834 (ARPVIILGPM…IYNKIKQIIE (176 aa)) constitute a Guanylate kinase-like domain. The residue at position 705 (Tyr705) is a Phosphotyrosine.

It belongs to the MAGUK family. In terms of assembly, interacts through its PDZ domains with NETO1, GRIN2B, SYNGAP1 and APC. Interacts through its first two PDZ domains with ERBB4. Interacts through its third PDZ domain with NLGN1, and probably with NLGN2 and NLGN3. Interacts through its guanylate kinase-like domain with DLGAP1, DLGAP2, DLGAP3 and DLGAP4. Interacts with FRMPD4 (via C-terminus). Interacts with LRFN1, LRFN2 and LRFN4. Interacts with FLTP. Interacts with GPR85. Interacts with DGKI (via PDZ-binding motif).

In terms of biological role, required for learning most likely through its role in synaptic plasticity following NMDA receptor signaling. The chain is Disks large homolog 3 (Dlg3) from Mus musculus (Mouse).